The following is a 59-amino-acid chain: MDVKRVKQILSSSSRIDVTYEGVPVWIESCDEQKGSAQVYDVSNPGESVHVDVTALEEK.

It belongs to the SspH family.

It localises to the spore core. The chain is Small, acid-soluble spore protein H 1 (sspH1) from Bacillus cereus (strain ATCC 14579 / DSM 31 / CCUG 7414 / JCM 2152 / NBRC 15305 / NCIMB 9373 / NCTC 2599 / NRRL B-3711).